The sequence spans 463 residues: Glutamate--tRNA ligase 1 (463 aa).

The 'HIGH' region motif lies at 10–20 (PSPTGYLHIGG). A 'KMSKS' region motif is present at residues 238–242 (KLSKR). K241 serves as a coordination point for ATP.

Belongs to the class-I aminoacyl-tRNA synthetase family. Glutamate--tRNA ligase type 1 subfamily. In terms of assembly, monomer.

The protein localises to the cytoplasm. The catalysed reaction is tRNA(Glu) + L-glutamate + ATP = L-glutamyl-tRNA(Glu) + AMP + diphosphate. Catalyzes the attachment of glutamate to tRNA(Glu) in a two-step reaction: glutamate is first activated by ATP to form Glu-AMP and then transferred to the acceptor end of tRNA(Glu). In Helicobacter pylori (strain HPAG1), this protein is Glutamate--tRNA ligase 1.